A 296-amino-acid polypeptide reads, in one-letter code: MSDKHINLVIVTGMSGAGKTVAIQSFEDLGYFTIDNMPPALVPKFLELIEQTNENRRVALVVDMRSRLFFKEINSTLDSIESNPSIDFRILFLDATDGELVSRYKETRRSHPLAADGRVLDGIRLERELLSPLKSMSQHVVDTTKLTPRQLRKTISDQFSEGSNQASFRIEVMSFGFKYGLPLDADLVFDVRFLPNPYYQVELREKTGLDEDVFNYVMSHPESEVFYKHLLNLIVPILPAYQKEGKSVLTVAIGCTGGQHRSVAFAHCLAESLATDWSVNESHRDQNRRKETVNRS.

An ATP-binding site is contributed by 13-20; sequence GMSGAGKT. 63–66 contacts GTP; the sequence is DMRS.

Belongs to the RapZ-like family.

Displays ATPase and GTPase activities. This is Nucleotide-binding protein Spy49_0545 from Streptococcus pyogenes serotype M49 (strain NZ131).